The following is a 534-amino-acid chain: NAD(P)H-quinone oxidoreductase chain 4 2 (534 aa).

14 helical membrane passes run 9–29 (FPWL…IPLI), 51–71 (WFAL…FYVG), 106–126 (LILL…PVTL), 130–150 (LFYF…AVQD), 152–172 (LLFF…LSIW), 184–204 (FILY…AMAF), 227–247 (LLMY…FPLH), 258–278 (TAPV…YALM), 290–310 (LYFA…AALT), 326–346 (ISHM…GMSG), 347–367 (AMLQ…LVGA), 399–419 (LASL…VFIG), 432–452 (LVVV…LLSM), and 479–499 (VFII…PKLV).

Belongs to the complex I subunit 4 family.

It localises to the cellular thylakoid membrane. The catalysed reaction is a plastoquinone + NADH + (n+1) H(+)(in) = a plastoquinol + NAD(+) + n H(+)(out). The enzyme catalyses a plastoquinone + NADPH + (n+1) H(+)(in) = a plastoquinol + NADP(+) + n H(+)(out). NDH-1 shuttles electrons from NAD(P)H, via FMN and iron-sulfur (Fe-S) centers, to quinones in the respiratory chain. The immediate electron acceptor for the enzyme in this species is believed to be plastoquinone. Couples the redox reaction to proton translocation (for every two electrons transferred, four hydrogen ions are translocated across the cytoplasmic membrane), and thus conserves the redox energy in a proton gradient. This Synechococcus sp. (strain JA-2-3B'a(2-13)) (Cyanobacteria bacterium Yellowstone B-Prime) protein is NAD(P)H-quinone oxidoreductase chain 4 2.